A 132-amino-acid polypeptide reads, in one-letter code: D-ribose pyranase (132 aa).

Catalysis depends on His20, which acts as the Proton donor. Substrate-binding positions include Asp28, His99, and 121 to 123; that span reads YAN.

The protein belongs to the RbsD / FucU family. RbsD subfamily. In terms of assembly, homodecamer.

The protein resides in the cytoplasm. The enzyme catalyses beta-D-ribopyranose = beta-D-ribofuranose. Its pathway is carbohydrate metabolism; D-ribose degradation; D-ribose 5-phosphate from beta-D-ribopyranose: step 1/2. Its function is as follows. Catalyzes the interconversion of beta-pyran and beta-furan forms of D-ribose. This is D-ribose pyranase from Variovorax paradoxus (strain S110).